Here is a 484-residue protein sequence, read N- to C-terminus: Calcium-dependent protein kinase 31 (484 aa).

Residue Gly2 is the site of N-myristoyl glycine attachment. One can recognise a Protein kinase domain in the interval Tyr28 to Met290. Residues Leu34–Thr42 and Lys57 each bind ATP. The active-site Proton acceptor is Asp156. The residue at position 196 (Ser196) is a Phosphoserine. Positions Ala295 to Ile325 are autoinhibitory domain. EF-hand domains follow at residues Glu332–Asn367, Leu368–Leu403, Asp404–Gly439, and Ile444–Leu474. Asp345, Asp347, Ser349, Thr351, Glu356, Asp381, Asp383, Asn385, Thr387, Glu392, Asp417, Asp419, Asp421, His423, Glu428, Asp452, Asp454, Asp456, Lys458, and Glu463 together coordinate Ca(2+).

Belongs to the protein kinase superfamily. Ser/Thr protein kinase family. CDPK subfamily.

The protein resides in the membrane. The enzyme catalyses L-seryl-[protein] + ATP = O-phospho-L-seryl-[protein] + ADP + H(+). It catalyses the reaction L-threonyl-[protein] + ATP = O-phospho-L-threonyl-[protein] + ADP + H(+). Activated by calcium. Autophosphorylation may play an important role in the regulation of the kinase activity. Functionally, may play a role in signal transduction pathways that involve calcium as a second messenger. The polypeptide is Calcium-dependent protein kinase 31 (CPK31) (Arabidopsis thaliana (Mouse-ear cress)).